Reading from the N-terminus, the 75-residue chain is Defense protein 6 (75 aa).

The N-terminal stretch at 1–20 (MKTCLVFAFFLVAVFAAVQA) is a signal peptide. A propeptide spanning residues 21–32 (EENDSPQTLPRR) is cleaved from the precursor. Intrachain disulfides connect Cys44/Cys63, Cys49/Cys68, and Cys53/Cys70.

Belongs to the invertebrate defensin family.

The protein resides in the secreted. Has antibacterial activity. The protein is Defense protein 6 of Lonomia obliqua (Moth).